A 364-amino-acid polypeptide reads, in one-letter code: Chorismate synthase (364 aa).

Arg47 lines the NADP(+) pocket. Residues 125–127, Gly288, 303–307, and Arg329 each bind FMN; these read RAS and KPTAT.

Belongs to the chorismate synthase family. Homotetramer. It depends on FMNH2 as a cofactor.

The catalysed reaction is 5-O-(1-carboxyvinyl)-3-phosphoshikimate = chorismate + phosphate. It functions in the pathway metabolic intermediate biosynthesis; chorismate biosynthesis; chorismate from D-erythrose 4-phosphate and phosphoenolpyruvate: step 7/7. Catalyzes the anti-1,4-elimination of the C-3 phosphate and the C-6 proR hydrogen from 5-enolpyruvylshikimate-3-phosphate (EPSP) to yield chorismate, which is the branch point compound that serves as the starting substrate for the three terminal pathways of aromatic amino acid biosynthesis. This reaction introduces a second double bond into the aromatic ring system. This is Chorismate synthase from Synechococcus sp. (strain CC9605).